The following is a 188-amino-acid chain: Probable RNA 2'-phosphotransferase (188 aa).

Belongs to the KptA/TPT1 family.

Removes the 2'-phosphate from RNA via an intermediate in which the phosphate is ADP-ribosylated by NAD followed by a presumed transesterification to release the RNA and generate ADP-ribose 1''-2''-cyclic phosphate (APPR&gt;P). May function as an ADP-ribosylase. This chain is Probable RNA 2'-phosphotransferase, found in Lacticaseibacillus paracasei (strain ATCC 334 / BCRC 17002 / CCUG 31169 / CIP 107868 / KCTC 3260 / NRRL B-441) (Lactobacillus paracasei).